The following is a 558-amino-acid chain: Delta-1-pyrroline-5-carboxylate dehydrogenase, mitochondrial (558 aa).

NAD(+)-binding positions include serine 198, lysine 223, and 276–280 (GSTGV). Catalysis depends on glutamate 306, which acts as the Proton acceptor. Cysteine 340 (nucleophile) is an active-site residue. Residue glutamate 438 coordinates NAD(+).

This sequence belongs to the aldehyde dehydrogenase family.

Its subcellular location is the mitochondrion matrix. The enzyme catalyses L-glutamate 5-semialdehyde + NAD(+) + H2O = L-glutamate + NADH + 2 H(+). Its pathway is amino-acid degradation; L-proline degradation into L-glutamate; L-glutamate from L-proline: step 2/2. Its function is as follows. Irreversible conversion of delta-1-pyrroline-5-carboxylate (P5C), derived either from proline or ornithine, to glutamate. This is a necessary step in the pathway interconnecting the urea and tricarboxylic acid cycles. In Dictyostelium discoideum (Social amoeba), this protein is Delta-1-pyrroline-5-carboxylate dehydrogenase, mitochondrial.